The chain runs to 293 residues: Pyridoxal 5'-phosphate synthase subunit PdxS (293 aa).

Aspartate 23 is a binding site for D-ribose 5-phosphate. The Schiff-base intermediate with D-ribose 5-phosphate role is filled by lysine 80. Glycine 152 provides a ligand contact to D-ribose 5-phosphate. Arginine 164 contacts D-glyceraldehyde 3-phosphate. D-ribose 5-phosphate contacts are provided by residues glycine 213 and 234–235; that span reads GS.

Belongs to the PdxS/SNZ family. In terms of assembly, in the presence of PdxT, forms a dodecamer of heterodimers.

It carries out the reaction aldehydo-D-ribose 5-phosphate + D-glyceraldehyde 3-phosphate + L-glutamine = pyridoxal 5'-phosphate + L-glutamate + phosphate + 3 H2O + H(+). It participates in cofactor biosynthesis; pyridoxal 5'-phosphate biosynthesis. Functionally, catalyzes the formation of pyridoxal 5'-phosphate from ribose 5-phosphate (RBP), glyceraldehyde 3-phosphate (G3P) and ammonia. The ammonia is provided by the PdxT subunit. Can also use ribulose 5-phosphate and dihydroxyacetone phosphate as substrates, resulting from enzyme-catalyzed isomerization of RBP and G3P, respectively. The chain is Pyridoxal 5'-phosphate synthase subunit PdxS from Herpetosiphon aurantiacus (strain ATCC 23779 / DSM 785 / 114-95).